Reading from the N-terminus, the 404-residue chain is uncharacterized protein (404 aa).

Positions 1 to 22 (MASSINNSSQPTVPSISNNSHG) are enriched in polar residues. The segment at 1–110 (MASSINNSSQ…QQTPVKRRRR (110 aa)) is disordered. T47 carries the post-translational modification Phosphothreonine. Residues 87 to 104 (SRGSSLKSHLETESQQTP) show a composition bias toward polar residues. The PHD-type zinc-finger motif lies at 117–166 (VDYCSACGGRGLFICCEGCPCSFHLSCLEPPLTPENIPEGSWFCVTCSIK).

This is an uncharacterized protein from Schizosaccharomyces pombe (strain 972 / ATCC 24843) (Fission yeast).